A 126-amino-acid polypeptide reads, in one-letter code: MNFPDDLRYTSDHEWVKVLDDGKVRVGITDFAQSELGDIVFVETKPVGTVLKQQDIFGTVEAVKTVADLFAPVTGKINAVNDALDAAEIVNSSPYDEGWMIEIIVDDPEQVNALMTVQEYKKTVGE.

The 82-residue stretch at 23–104 (KVRVGITDFA…YDEGWMIEII (82 aa)) folds into the Lipoyl-binding domain. Lys64 is modified (N6-lipoyllysine).

This sequence belongs to the GcvH family. As to quaternary structure, the glycine cleavage system is composed of four proteins: P, T, L and H. It depends on (R)-lipoate as a cofactor.

Functionally, the glycine cleavage system catalyzes the degradation of glycine. The H protein shuttles the methylamine group of glycine from the P protein to the T protein. The sequence is that of Glycine cleavage system H protein from Chlorobium phaeobacteroides (strain BS1).